Consider the following 153-residue polypeptide: Putative WASP homolog-associated protein with actin, membranes and microtubules-like protein 1 (153 aa).

The stretch at alanine 113–aspartate 151 forms a coiled coil.

The sequence is that of Putative WASP homolog-associated protein with actin, membranes and microtubules-like protein 1 (WHAMMP3) from Homo sapiens (Human).